We begin with the raw amino-acid sequence, 828 residues long: Putative dual specificity tyrosine-phosphorylation-regulated kinase 3 homolog (828 aa).

Residues 1-14 (MVGSQEKKNNHIEL) show a composition bias toward basic and acidic residues. Residues 1–26 (MVGSQEKKNNHIELSETPATDKNNLN) form a disordered region. Positions 17-26 (TPATDKNNLN) are enriched in polar residues. One can recognise a Protein kinase domain in the interval 276-589 (YEMLKIIGKG…PSEALKHPWL (314 aa)). ATP is bound by residues 282–290 (IGKGSFGQV) and K305. D402 functions as the Proton acceptor in the catalytic mechanism. S616 carries the post-translational modification Phosphoserine.

Belongs to the protein kinase superfamily. CMGC Ser/Thr protein kinase family. MNB/DYRK subfamily. Post-translationally, autophosphorylated on tyrosine residues.

It catalyses the reaction L-seryl-[protein] + ATP = O-phospho-L-seryl-[protein] + ADP + H(+). The enzyme catalyses L-threonyl-[protein] + ATP = O-phospho-L-threonyl-[protein] + ADP + H(+). It carries out the reaction L-tyrosyl-[protein] + ATP = O-phospho-L-tyrosyl-[protein] + ADP + H(+). This is Putative dual specificity tyrosine-phosphorylation-regulated kinase 3 homolog (Dyrk3) from Drosophila melanogaster (Fruit fly).